We begin with the raw amino-acid sequence, 210 residues long: Large ribosomal subunit protein uL4 (210 aa).

Over residues 44-54 (KRQGTASTLTR) the composition is skewed to polar residues. Positions 44 to 85 (KRQGTASTLTRSEVRGGGRKPYKQKGTGRARQGSIRTPLRPG) are disordered. The span at 60 to 71 (GGRKPYKQKGTG) shows a compositional bias: basic residues.

Belongs to the universal ribosomal protein uL4 family. Part of the 50S ribosomal subunit.

Functionally, one of the primary rRNA binding proteins, this protein initially binds near the 5'-end of the 23S rRNA. It is important during the early stages of 50S assembly. It makes multiple contacts with different domains of the 23S rRNA in the assembled 50S subunit and ribosome. In terms of biological role, forms part of the polypeptide exit tunnel. In Prochlorococcus marinus (strain MIT 9301), this protein is Large ribosomal subunit protein uL4.